Reading from the N-terminus, the 982-residue chain is ATP-dependent DNA helicase Q5 (982 aa).

A Helicase ATP-binding domain is found at 39-213 (MAVVKGAEDV…FAALHLKQPV (175 aa)). Position 52–59 (52–59 (MPTGAGKS)) interacts with ATP. The DEAH box signature appears at 157–160 (DEAH). The 158-residue stretch at 241 to 398 (NLRDFCLKAL…NKPSDKATLL (158 aa)) folds into the Helicase C-terminal domain. Zn(2+) contacts are provided by cysteine 412, cysteine 428, cysteine 432, and cysteine 435. 2 positions are modified to phosphoserine: serine 489 and serine 492. Positions 491 to 621 (GSGDEGRDEA…ASKDGQLYDM (131 aa)) are interaction with POLR2A. At threonine 527 the chain carries Phosphothreonine. Positions 653-726 (PKRVGAGFSK…ALGSSVNCGD (74 aa)) are interaction with RAD51. Disordered regions lie at residues 675–797 (GKSH…PGKC) and 812–893 (QTEG…AQEP). Phosphoserine; by CDK1 is present on serine 728.

Belongs to the helicase family. RecQ subfamily. Monomer. Interacts with TOP2A, TOP3A and TOP3B. Interacts with RNA polymerase II subunit POLR2A. Identified in a complex with the RNA polymerase II core bound to DNA. Interacts with RAD51. Interacts with WRN; this interaction stimulates WRN helicase activity on DNA fork duplexes. Interacts with MUS1; this interaction promotes MUS81-dependent mitotic DNA synthesis. Zn(2+) serves as cofactor. Post-translationally, phosphorylated by CDK1 at Ser-728; this phosphorylation is required for RECQL5-mediated disruption of RAD51 filaments on stalled replication forks.

The protein resides in the nucleus. It is found in the nucleoplasm. It carries out the reaction Couples ATP hydrolysis with the unwinding of duplex DNA by translocating in the 3'-5' direction.. The enzyme catalyses ATP + H2O = ADP + phosphate + H(+). Functionally, DNA helicase that plays an important role in DNA replication, transcription and repair. Binds to the RNA polymerase II subunit POLR2A during transcription elongation and suppresses transcription-associated genomic instability. Also associates with POLR1A and enforces the stability of ribosomal DNA arrays. Plays an important role in mitotic chromosome separation after cross-over events and cell cycle progress. Mechanistically, removes RAD51 filaments protecting stalled replication forks at common fragile sites and stimulates MUS81-EME1 endonuclease leading to mitotic DNA synthesis. Required for efficient DNA repair, including repair of inter-strand cross-links. Stimulates DNA decatenation mediated by TOP2A. Prevents sister chromatid exchange and homologous recombination. The polypeptide is ATP-dependent DNA helicase Q5 (Recql5) (Mus musculus (Mouse)).